We begin with the raw amino-acid sequence, 380 residues long: Tubby-like F-box protein 9 (380 aa).

In terms of domain architecture, F-box spans 30–76 (PFSWSELPEELLREILIRVETVDGGDWPSRRNVVACAGVCRSWRILT). A disordered region spans residues 258–283 (SSRSSPVFRSHSKPLRSNSASCSDSG). Over residues 272-283 (LRSNSASCSDSG) the composition is skewed to polar residues.

Belongs to the TUB family. In terms of assembly, part of a SCF (SKP1-cullin-F-box) protein ligase complex. Interacts with SKP1A/ASK1 and XERICO. In terms of tissue distribution, ubiquitous.

The protein operates within protein modification; protein ubiquitination. Component of SCF(ASK-cullin-F-box) E3 ubiquitin ligase complexes, which may mediate the ubiquitination and subsequent proteasomal degradation of target proteins. Confers sensitivity to ABA during seed germination and early seedling development. In Arabidopsis thaliana (Mouse-ear cress), this protein is Tubby-like F-box protein 9.